Consider the following 229-residue polypeptide: Heptaprenylglyceryl phosphate synthase (229 aa).

Position 12 (lysine 12) interacts with sn-glycerol 1-phosphate. The Mg(2+) site is built by aspartate 14 and threonine 40. Sn-glycerol 1-phosphate contacts are provided by residues 159–164, glycine 189, and 209–210; these read YIEYSG and GN.

The protein belongs to the GGGP/HepGP synthase family. Group I subfamily. As to quaternary structure, homodimer. Requires Mg(2+) as cofactor.

It carries out the reaction sn-glycerol 1-phosphate + all-trans-heptaprenyl diphosphate = 3-heptaprenyl-sn-glycero-1-phosphate + diphosphate. It participates in membrane lipid metabolism; glycerophospholipid metabolism. In terms of biological role, prenyltransferase that catalyzes in vivo the transfer of the heptaprenyl moiety of heptaprenyl pyrophosphate (HepPP; 35 carbon atoms) to the C3 hydroxyl of sn-glycerol-1-phosphate (G1P), producing heptaprenylglyceryl phosphate (HepGP). This reaction is an ether-bond-formation step in the biosynthesis of archaea-type G1P-based membrane lipids found in Bacillales. The sequence is that of Heptaprenylglyceryl phosphate synthase from Staphylococcus carnosus (strain TM300).